Reading from the N-terminus, the 696-residue chain is DNA-directed RNA polymerase subunit beta' (696 aa).

Zn(2+)-binding residues include Cys69, Cys71, Cys87, and Cys90. 3 residues coordinate Mg(2+): Asp504, Asp506, and Asp508.

Belongs to the RNA polymerase beta' chain family. RpoC1 subfamily. As to quaternary structure, in plastids the minimal PEP RNA polymerase catalytic core is composed of four subunits: alpha, beta, beta', and beta''. When a (nuclear-encoded) sigma factor is associated with the core the holoenzyme is formed, which can initiate transcription. Mg(2+) is required as a cofactor. It depends on Zn(2+) as a cofactor.

The protein localises to the plastid. Its subcellular location is the chloroplast. It catalyses the reaction RNA(n) + a ribonucleoside 5'-triphosphate = RNA(n+1) + diphosphate. In terms of biological role, DNA-dependent RNA polymerase catalyzes the transcription of DNA into RNA using the four ribonucleoside triphosphates as substrates. This Pinus thunbergii (Japanese black pine) protein is DNA-directed RNA polymerase subunit beta'.